The sequence spans 310 residues: Methionyl-tRNA formyltransferase (310 aa).

109–112 (SLLP) contacts (6S)-5,6,7,8-tetrahydrofolate.

It belongs to the Fmt family.

It catalyses the reaction L-methionyl-tRNA(fMet) + (6R)-10-formyltetrahydrofolate = N-formyl-L-methionyl-tRNA(fMet) + (6S)-5,6,7,8-tetrahydrofolate + H(+). Functionally, attaches a formyl group to the free amino group of methionyl-tRNA(fMet). The formyl group appears to play a dual role in the initiator identity of N-formylmethionyl-tRNA by promoting its recognition by IF2 and preventing the misappropriation of this tRNA by the elongation apparatus. In Pseudomonas putida (strain ATCC 700007 / DSM 6899 / JCM 31910 / BCRC 17059 / LMG 24140 / F1), this protein is Methionyl-tRNA formyltransferase.